Reading from the N-terminus, the 125-residue chain is S-adenosylmethionine decarboxylase proenzyme (125 aa).

Residue S61 is the Schiff-base intermediate with substrate; via pyruvic acid of the active site. Position 61 is a pyruvic acid (Ser); by autocatalysis (S61). The active-site Proton acceptor; for processing activity is the H66. C81 serves as the catalytic Proton donor; for catalytic activity.

The protein belongs to the prokaryotic AdoMetDC family. Type 1 subfamily. Heterotetramer of two alpha and two beta chains arranged as a dimer of alpha/beta heterodimers. Requires pyruvate as cofactor. Is synthesized initially as an inactive proenzyme. Formation of the active enzyme involves a self-maturation process in which the active site pyruvoyl group is generated from an internal serine residue via an autocatalytic post-translational modification. Two non-identical subunits are generated from the proenzyme in this reaction, and the pyruvate is formed at the N-terminus of the alpha chain, which is derived from the carboxyl end of the proenzyme. The post-translation cleavage follows an unusual pathway, termed non-hydrolytic serinolysis, in which the side chain hydroxyl group of the serine supplies its oxygen atom to form the C-terminus of the beta chain, while the remainder of the serine residue undergoes an oxidative deamination to produce ammonia and the pyruvoyl group blocking the N-terminus of the alpha chain.

The enzyme catalyses S-adenosyl-L-methionine + H(+) = S-adenosyl 3-(methylsulfanyl)propylamine + CO2. The protein operates within amine and polyamine biosynthesis; S-adenosylmethioninamine biosynthesis; S-adenosylmethioninamine from S-adenosyl-L-methionine: step 1/1. Catalyzes the decarboxylation of S-adenosylmethionine to S-adenosylmethioninamine (dcAdoMet), the propylamine donor required for the synthesis of the polyamines spermine and spermidine from the diamine putrescine. The polypeptide is S-adenosylmethionine decarboxylase proenzyme (Prochlorococcus marinus (strain MIT 9313)).